The primary structure comprises 780 residues: Gelsolin (780 aa).

M1 bears the N-acetylmethionine; alternate mark. Positions 1–25 are cleaved as a signal peptide; that stretch reads MAPYRSSLLCALLLLALCALSPSHA. The segment at 51–174 is actin-severing; it reads VVEHPEFLKA…YKKGGVASGF (124 aa). The stretch at 74–155 is one Gelsolin-like 1 repeat; it reads FDLVPVPPNL…EVQGFESSTF (82 aa). At Y84 the chain carries Phosphotyrosine. The Ca(2+) site is built by G90, D91, E122, D134, G139, and A141. An actin-actin interfilament contact point region spans residues 121-124; sequence DESG. 160-167 contributes to the a 1,2-diacyl-sn-glycero-3-phospho-(1D-myo-inositol-4,5-bisphosphate) binding site; that stretch reads KSGLKYKK. Ca(2+) is bound at residue V170. 186–194 is a binding site for a 1,2-diacyl-sn-glycero-3-phospho-(1D-myo-inositol-4,5-bisphosphate); that stretch reads RLFQVKGRR. The stretch at 196–268 is one Gelsolin-like 2 repeat; that stretch reads VRATEVPVSW…SEEGGEPEAM (73 aa). Ca(2+) contacts are provided by G211 and D212. Cysteines 213 and 226 form a disulfide. Ca(2+) is bound at residue E234. The tract at residues 244–269 is disordered; the sequence is GIRDNERSGRAQVHVSEEGGEPEAML. 4 residues coordinate Ca(2+): D284, E327, D328, and E352. One copy of the Gelsolin-like 3 repeat lies at 315–387; it reads DENPFAQGAL…LPEGGETPLF (73 aa). Phosphotyrosine occurs at positions 407 and 463. Residues 432 to 780 are actin-binding, Ca-sensitive; the sequence is AAQHGMDDDG…LDRALAELAA (349 aa). One copy of the Gelsolin-like 4 repeat lies at 453–534; sequence SNKVPVDPAT…VQGKEPAHLM (82 aa). G469, D470, E500, D512, G517, P519, and T549 together coordinate Ca(2+). One copy of the Gelsolin-like 5 repeat lies at 575–640; sequence RAVEVMPKSG…EEGSEPDAFW (66 aa). K582 carries the post-translational modification N6-acetyllysine. N589 and D590 together coordinate Ca(2+). Y601 is modified (phosphotyrosine). Position 612 (E612) interacts with Ca(2+). Y649 is subject to Phosphotyrosine. Residues 679–754 form a Gelsolin-like 6 repeat; the sequence is IEEVPGELMQ…VRQGFEPPSF (76 aa). Residues D694, D695, and E717 each coordinate Ca(2+). T740 is subject to Phosphothreonine.

Belongs to the villin/gelsolin family. In terms of assembly, binds to actin and to fibronectin. Identified in a complex composed of ACTA1, COBL, GSN and TMSB4X. Interacts with the inactive form of EIF2AK2/PKR. Interacts with FLII. Post-translationally, phosphorylated on tyrosine residues in vitro.

It localises to the cytoplasm. It is found in the cytoskeleton. The protein resides in the secreted. In terms of biological role, calcium-regulated, actin-modulating protein that binds to the plus (or barbed) ends of actin monomers or filaments, preventing monomer exchange (end-blocking or capping). It can promote the assembly of monomers into filaments (nucleation) as well as sever filaments already formed. Plays a role in ciliogenesis. The chain is Gelsolin (Gsn) from Mus musculus (Mouse).